Consider the following 212-residue polypeptide: MIMDKSIPKATAKRLSLYYRIFKRFNTDGIEKASSKQIADALGIDSATVRRDFSYFGELGRRGFGYDVKKLMNFFAEILNDHSTTNVMLVGCGNIGRALLHYRFHDRNKMQISMAFDLDSNDLVGKTTEDGIPVYGISTINDHLIDSDIETAILTVPSTEAQEVADILVKAGIKGILSFSPVHLTLPKDIIVQYVDLTSELQTLLYFMNQQR.

The segment at residues 17–56 is a DNA-binding region (H-T-H motif); it reads LYYRIFKRFNTDGIEKASSKQIADALGIDSATVRRDFSYF. 91-96 provides a ligand contact to NAD(+); the sequence is GCGNIG.

This sequence belongs to the transcriptional regulatory Rex family. In terms of assembly, homodimer.

Its subcellular location is the cytoplasm. Its function is as follows. Modulates transcription in response to changes in cellular NADH/NAD(+) redox state. The chain is Redox-sensing transcriptional repressor Rex from Streptococcus agalactiae serotype III (strain NEM316).